Reading from the N-terminus, the 43-residue chain is Photosystem II reaction center protein K (43 aa).

Positions 1–6 (MSLLLA) are excised as a propeptide. The chain crosses the membrane as a helical span at residues 18–38 (IVDVLPIIPVLFLLLAFVWQA).

It belongs to the PsbK family. As to quaternary structure, PSII is composed of 1 copy each of membrane proteins PsbA, PsbB, PsbC, PsbD, PsbE, PsbF, PsbH, PsbI, PsbJ, PsbK, PsbL, PsbM, PsbT, PsbX, PsbY, PsbZ, Psb30/Ycf12, at least 3 peripheral proteins of the oxygen-evolving complex and a large number of cofactors. It forms dimeric complexes.

Its subcellular location is the plastid. It is found in the chloroplast thylakoid membrane. In terms of biological role, one of the components of the core complex of photosystem II (PSII). PSII is a light-driven water:plastoquinone oxidoreductase that uses light energy to abstract electrons from H(2)O, generating O(2) and a proton gradient subsequently used for ATP formation. It consists of a core antenna complex that captures photons, and an electron transfer chain that converts photonic excitation into a charge separation. In Oltmannsiellopsis viridis (Marine flagellate), this protein is Photosystem II reaction center protein K.